The chain runs to 492 residues: Solute carrier family 2, facilitated glucose transporter member 1 (492 aa).

Residue M1 is modified to N-acetylmethionine. Residues 1–11 (MEPTSKKLTGR) are Cytoplasmic-facing. Residues 12-33 (LMLAVGGAVLGSLQFGYNTGVI) traverse the membrane as a helical segment. Residues 34–66 (NAPQKVIEEFYNQTWVQRYGEPIPPATLTTLWS) lie on the Extracellular side of the membrane. N45 carries N-linked (GlcNAc...) asparagine glycosylation. A helical membrane pass occupies residues 67–87 (LSVAIFSVGGMIGSFSVGLFV). At 88-90 (NRF) the chain is on the cytoplasmic side. Residues 91-112 (GRRNSMLMMNLLAFVSAVLMGF) form a helical membrane-spanning segment. The Extracellular segment spans residues 113-120 (SKLGKSFE). Residues 121 to 144 (MLILGRFIIGVYCGLTTGFVPMYV) form a helical membrane-spanning segment. Residues 145 to 155 (GEVSPTELRGA) are Cytoplasmic-facing. A helical membrane pass occupies residues 156–176 (LGTLHQLGIVVGILIAQVFGL). Residue Q161 participates in D-glucose binding. The Extracellular segment spans residues 177 to 185 (DSIMGNQEL). The helical transmembrane segment at 186–206 (WPLLLSVIFIPALLQCILLPF) threads the bilayer. Residues 207 to 271 (CPESPRFLLI…LFRSAAYRQP (65 aa)) are Cytoplasmic-facing. Position 226 is a phosphoserine (S226). A helical transmembrane segment spans residues 272–293 (ILIAVVLQLSQQLSGINAVFYY). D-glucose contacts are provided by residues 282 to 283 (QQ) and N288. Residues 294–306 (STSIFEKAGVQQP) lie on the Extracellular side of the membrane. Residues 307-328 (VYATIGSGIVNTAFTVVSLFVV) form a helical membrane-spanning segment. Position 317 (N317) interacts with D-glucose. Residues 329 to 334 (ERAGRR) are Cytoplasmic-facing. Residues 335-355 (TLHLIGLAGMAGCAVLMTIAL) traverse the membrane as a helical segment. Residues 356–365 (ALLERLPWMS) are Extracellular-facing. The helical transmembrane segment at 366 to 388 (YLSIVAIFGFVAFFEVGPGPIPW) threads the bilayer. D-glucose-binding residues include E380 and W388. Residues 389–401 (FIVAELFSQGPRP) are Cytoplasmic-facing. The helical transmembrane segment at 402-422 (AAIAVAGFSNWTSNFIVGMCF) threads the bilayer. At 423–429 (QYVEQLC) the chain is on the extracellular side. A helical transmembrane segment spans residues 430-450 (GPYVFIIFTVLLVLFFIFTYF). Topologically, residues 451-492 (KVPETKGRTFDEIASGFRQGGASQSDKTPEELFHPLGADSQV) are cytoplasmic. Position 465 is a phosphoserine (S465). The interval 468–492 (RQGGASQSDKTPEELFHPLGADSQV) is disordered. Phosphothreonine is present on T478. S490 is subject to Phosphoserine.

Belongs to the major facilitator superfamily. Sugar transporter (TC 2.A.1.1) family. Glucose transporter subfamily. As to quaternary structure, found in a complex with ADD2, DMTN and SLC2A1. Interacts (via C-terminus cytoplasmic region) with DMTN. Interacts with SNX27; the interaction is required when endocytosed to prevent degradation in lysosomes and promote recycling to the plasma membrane. Interacts with GIPC (via PDZ domain). Interacts with STOM. Interacts with SGTA (via Gln-rich region). Interacts with BSG. Interacts with SMIM43; the interaction may promote SLC2A1-mediated glucose transport to meet the energy needs of mesendoderm differentiation. Phosphorylation at Ser-226 by PKC promotes glucose uptake by increasing cell membrane localization. As to expression, detected in brain capillary (at protein level). Detected in brain capillary.

Its subcellular location is the cell membrane. It localises to the photoreceptor inner segment. The catalysed reaction is D-glucose(out) = D-glucose(in). With respect to regulation, the uptake of glucose is inhibited by cytochalasin B. Glucose uptake is increased in response to phorbol ester 12-O-tetradecanoylphorbol-13-acetate (TPA) treatment: TPA-induced glucose uptake requires phosphorylation at Ser-226. In terms of biological role, facilitative glucose transporter, which is responsible for constitutive or basal glucose uptake. Has a very broad substrate specificity; can transport a wide range of aldoses including both pentoses and hexoses. Most important energy carrier of the brain: present at the blood-brain barrier and assures the energy-independent, facilitative transport of glucose into the brain. In association with BSG and NXNL1, promotes retinal cone survival by increasing glucose uptake into photoreceptors. Required for mesendoderm differentiation. The sequence is that of Solute carrier family 2, facilitated glucose transporter member 1 from Bos taurus (Bovine).